Reading from the N-terminus, the 578-residue chain is Zinc finger-containing ubiquitin peptidase 1 (578 aa).

The C2H2-type 1 zinc finger occupies Leu-2–His-24. The C2H2-type 2; atypical zinc-finger motif lies at Ile-29–His-52. 2 consecutive C2H2-type zinc fingers follow at residues Pro-154–His-177 and Tyr-193–His-215. An MIU region spans residues Asp-226–Arg-248. Positions Arg-249–Gly-274 are zUBD/ZHA. Lys-262 carries the N6-acetyllysine modification. Cys-360 (nucleophile) is an active-site residue. His-491 serves as the catalytic Proton acceptor. Residue Asp-512 is part of the active site.

This sequence belongs to the peptidase C78 family. ZUFSP subfamily. Interacts with RPA1 and RPA2.

The protein resides in the cytoplasm. It is found in the nucleus. It catalyses the reaction Thiol-dependent hydrolysis of ester, thioester, amide, peptide and isopeptide bonds formed by the C-terminal Gly of ubiquitin (a 76-residue protein attached to proteins as an intracellular targeting signal).. Functionally, deubiquitinase with endodeubiquitinase activity that specifically interacts with and cleaves 'Lys-63'-linked long polyubiquitin chains. Shows only weak activity against 'Lys-11' and 'Lys-48'-linked chains. Plays an important role in genome stability pathways, functioning to prevent spontaneous DNA damage and also promote cellular survival in response to exogenous DNA damage. Modulates the ubiquitination status of replication protein A (RPA) complex proteins in response to replication stress. The protein is Zinc finger-containing ubiquitin peptidase 1 of Macaca fascicularis (Crab-eating macaque).